A 276-amino-acid polypeptide reads, in one-letter code: ESX-2 secretion-associated protein EspG2 (276 aa).

It belongs to the EspG family. In terms of assembly, interacts specifically with ESX-2-dependent PE/PPE proteins.

Its subcellular location is the cytoplasm. Its function is as follows. Specific chaperone for cognate PE/PPE proteins. Plays an important role in preventing aggregation of PE/PPE dimers. This is ESX-2 secretion-associated protein EspG2 from Mycobacterium tuberculosis (strain CDC 1551 / Oshkosh).